The sequence spans 646 residues: Acetyl-coenzyme A synthetase (646 aa).

Residues 190 to 193 (RAGN) and T309 each bind CoA. ATP contacts are provided by residues 385 to 387 (GEP), 409 to 414 (DTWWQT), D498, and R513. Residue S521 coordinates CoA. An ATP-binding site is contributed by R524. The Mg(2+) site is built by V535, H537, and V540. R582 provides a ligand contact to CoA. K607 bears the N6-acetyllysine mark.

It belongs to the ATP-dependent AMP-binding enzyme family. Mg(2+) is required as a cofactor. Acetylated. Deacetylation by the SIR2-homolog deacetylase activates the enzyme.

It catalyses the reaction acetate + ATP + CoA = acetyl-CoA + AMP + diphosphate. In terms of biological role, catalyzes the conversion of acetate into acetyl-CoA (AcCoA), an essential intermediate at the junction of anabolic and catabolic pathways. AcsA undergoes a two-step reaction. In the first half reaction, AcsA combines acetate with ATP to form acetyl-adenylate (AcAMP) intermediate. In the second half reaction, it can then transfer the acetyl group from AcAMP to the sulfhydryl group of CoA, forming the product AcCoA. The chain is Acetyl-coenzyme A synthetase from Pseudoalteromonas translucida (strain TAC 125).